A 173-amino-acid polypeptide reads, in one-letter code: Ribulose bisphosphate carboxylase small subunit, chloroplastic 5 (173 aa).

Residues 1–49 (MASIPATVATVAQANMVAPFTGLKSNAAFPVTKKVNDFSTLPSNGGRVQ) constitute a chloroplast transit peptide.

This sequence belongs to the RuBisCO small chain family. Heterohexadecamer of 8 large and 8 small subunits.

It is found in the plastid. Its subcellular location is the chloroplast. In terms of biological role, ruBisCO catalyzes two reactions: the carboxylation of D-ribulose 1,5-bisphosphate, the primary event in carbon dioxide fixation, as well as the oxidative fragmentation of the pentose substrate. Both reactions occur simultaneously and in competition at the same active site. Although the small subunit is not catalytic it is essential for maximal activity. This chain is Ribulose bisphosphate carboxylase small subunit, chloroplastic 5, found in Flaveria pringlei.